We begin with the raw amino-acid sequence, 126 residues long: Holo-[acyl-carrier-protein] synthase (126 aa).

Mg(2+) is bound by residues D9 and E57.

The protein belongs to the P-Pant transferase superfamily. AcpS family. It depends on Mg(2+) as a cofactor.

It localises to the cytoplasm. It catalyses the reaction apo-[ACP] + CoA = holo-[ACP] + adenosine 3',5'-bisphosphate + H(+). Transfers the 4'-phosphopantetheine moiety from coenzyme A to a Ser of acyl-carrier-protein. This is Holo-[acyl-carrier-protein] synthase from Idiomarina loihiensis (strain ATCC BAA-735 / DSM 15497 / L2-TR).